The chain runs to 649 residues: tRNA-guanine(15) transglycosylase (649 aa).

Residue Asp-88 is the Nucleophile of the active site. Substrate-binding residues include Asp-123 and Ala-194. 3 residues coordinate Zn(2+): Cys-280, Cys-282, and Cys-285. Positions 573–648 (KYRIVIDSSV…VAVTLRGGLK (76 aa)) constitute a PUA domain.

This sequence belongs to the archaeosine tRNA-ribosyltransferase family. Zn(2+) is required as a cofactor.

It catalyses the reaction guanosine(15) in tRNA + 7-cyano-7-deazaguanine = 7-cyano-7-carbaguanosine(15) in tRNA + guanine. Its pathway is tRNA modification; archaeosine-tRNA biosynthesis. Exchanges the guanine residue with 7-cyano-7-deazaguanine (preQ0) at position 15 in the dihydrouridine loop (D-loop) of archaeal tRNAs. In Methanococcus maripaludis (strain C7 / ATCC BAA-1331), this protein is tRNA-guanine(15) transglycosylase.